The following is a 265-amino-acid chain: Eukaryotic translation initiation factor 3 subunit J (265 aa).

The tract at residues 1-71 (MSWDDEAING…KESSADRALL (71 aa)) is disordered. A compositionally biased stretch (acidic residues) spans 23–32 (WDAEIGDDEP). Basic and acidic residues predominate over residues 42-71 (EEKKPAPKPKKEQPKKVKKGKESSADRALL). A Phosphoserine modification is found at serine 65. Threonine 75 is modified (phosphothreonine). Serine 92 carries the phosphoserine modification. The segment at 219 to 265 (VRGGTATGGAGKKKVKGKTNLGGAFKKDQDFDLDGPDDFEFGDDDFM) is disordered. At arginine 220 the chain carries Omega-N-methylarginine. Acidic residues predominate over residues 249–265 (FDLDGPDDFEFGDDDFM).

It belongs to the eIF-3 subunit J family. In terms of assembly, probable component of the eukaryotic translation initiation factor 3 (eIF-3) complex. Is not part of the eIF-3 core complex, with which it is associated in substochiometric amounts.

The protein resides in the cytoplasm. Its function is as follows. Component of the eukaryotic translation initiation factor 3 (eIF-3) complex, which is involved in protein synthesis of a specialized repertoire of mRNAs and, together with other initiation factors, stimulates binding of mRNA and methionyl-tRNAi to the 40S ribosome. The eIF-3 complex specifically targets and initiates translation of a subset of mRNAs involved in cell proliferation. This Saccharomyces cerevisiae (strain ATCC 204508 / S288c) (Baker's yeast) protein is Eukaryotic translation initiation factor 3 subunit J.